The following is a 158-amino-acid chain: FUN14 domain-containing protein 1 (158 aa).

Positions 21-24 match the YXXL motif; it reads YEVV. 2 helical membrane passes run 51-70 and 77-98; these read YSVTTQLVMGGLTGWCAGYL and IAATAVGGGFLLLQIANHSGYV.

Belongs to the FUN14 family.

It localises to the mitochondrion outer membrane. Acts as an activator of hypoxia-induced mitophagy, an important mechanism for mitochondrial quality control. The protein is FUN14 domain-containing protein 1 (fundc1) of Tetraodon nigroviridis (Spotted green pufferfish).